The sequence spans 789 residues: Transducer protein Htr6 (789 aa).

The next 2 membrane-spanning stretches (helical) occupy residues 29-49 (FAVA…FAFQ) and 294-314 (TVTV…IALG). 2 consecutive HAMP domains span residues 315–367 (RHTV…DRIQ) and 409–462 (ERLQ…ATIA). The region spanning 481–717 (GAEEIETTSQ…SVVRRVDDVA (237 aa)) is the Methyl-accepting transducer domain. Positions 763 to 789 (NQFETRADADEPDADTTVDASADDTGD) are disordered. The span at 772 to 789 (DEPDADTTVDASADDTGD) shows a compositional bias: acidic residues.

This sequence belongs to the methyl-accepting chemotaxis (MCP) protein family. Methylated by CheR.

The protein resides in the cell membrane. Its function is as follows. Potentially involved in chemo- or phototactic signal transduction. In Halobacterium salinarum (strain ATCC 29341 / DSM 671 / R1), this protein is Transducer protein Htr6 (htr6).